A 286-amino-acid chain; its full sequence is B3 domain-containing protein REM20 (286 aa).

A DNA-binding region (TF-B3) is located at residues 9 to 102 (PRFFKVFLVE…TFEVSVFDRW (94 aa)). The interval 117 to 161 (SDSDSDSVVEDEKDSTDVVEDDDDEDEDEDEDDDGSFDEDEEISQ) is disordered. Positions 119–159 (SDSDSVVEDEKDSTDVVEDDDDEDEDEDEDDDGSFDEDEEI) are enriched in acidic residues.

It is found in the nucleus. This is B3 domain-containing protein REM20 (REM20) from Arabidopsis thaliana (Mouse-ear cress).